The chain runs to 315 residues: Calumenin-A (315 aa).

The first 19 residues, 1 to 19, serve as a signal peptide directing secretion; the sequence is MEIRPLLMCFALCVVYATS. EF-hand domains lie at 68 to 103, 104 to 139, 151 to 186, 188 to 223, 229 to 264, and 265 to 300; these read ESKN…AQKK, YIYD…TYLD, QMMA…EEYE, MKDI…HEDE, WVAT…ADYD, and HAEA…FVGS. Ca(2+) contacts are provided by D81, D83, D85, E92, D117, N119, D121, M123, and E128. N-linked (GlcNAc...) asparagine glycosylation is present at N131. Ca(2+) is bound by residues D164, N166, D168, E175, D201, N203, D205, E212, D242, N244, D246, K248, E253, D278, N280, D282, K284, and E289. The Prevents secretion from ER signature appears at 312 to 315; that stretch reads HDEF.

The protein belongs to the CREC family. Interacts with ggcx.

The protein localises to the endoplasmic reticulum membrane. It is found in the golgi apparatus. The protein resides in the secreted. Its subcellular location is the melanosome. It localises to the sarcoplasmic reticulum lumen. Involved in regulation of vitamin K-dependent carboxylation of multiple N-terminal glutamate residues. Seems to inhibit gamma-carboxylase ggcx. Binds 7 calcium ions with a low affinity. In Danio rerio (Zebrafish), this protein is Calumenin-A (calua).